Here is a 788-residue protein sequence, read N- to C-terminus: uncharacterized protein (788 aa).

The 209-residue stretch at glutamate 485–glycine 693 folds into the Adrift-type SAM-dependent 2'-O-MTase domain. Positions 521 and 604 each coordinate S-adenosyl-L-methionine. Lysine 645 functions as the Proton acceptor in the catalytic mechanism.

This is an uncharacterized protein from Acanthamoeba polyphaga (Amoeba).